The chain runs to 184 residues: Ribosome-recycling factor (184 aa).

Belongs to the RRF family.

It localises to the cytoplasm. Responsible for the release of ribosomes from messenger RNA at the termination of protein biosynthesis. May increase the efficiency of translation by recycling ribosomes from one round of translation to another. The sequence is that of Ribosome-recycling factor from Clostridium botulinum (strain Loch Maree / Type A3).